Consider the following 515-residue polypeptide: Envelope glycoprotein (515 aa).

The N-terminal stretch at 1–33 (MPKERRSRRRPQPIIRWVSLTLTLLSLCQPIQT) is a signal peptide. At 34 to 435 (WRCSLSLGNQ…LGLTAWVRET (402 aa)) the chain is on the extracellular side. Residues Asn-129 and Asn-203 are each glycosylated (N-linked (GlcNAc...) asparagine; by host). The CXXC motif lies at 212–215 (CAIC). Intrachain disulfides connect Cys-212-Cys-215, Cys-212-Cys-392, and Cys-384-Cys-391. N-linked (GlcNAc...) asparagine; by host glycans are attached at residues Asn-230, Asn-251, Asn-256, Asn-271, and Asn-287. The segment at 304–324 (AAALTLGLALSVGLTGINVAV) is fusion peptide. Coiled-coil stretches lie at residues 330 to 376 (QRLT…WLYI) and 388 to 420 (NEPC…DWQW). Asn-351 carries N-linked (GlcNAc...) asparagine; by host glycosylation. Residues 365-381 (AQNRRGLDWLYIRLGFQ) form an immunosuppression region. Residues 384 to 392 (CPTINEPCC) carry the CX6CC motif. Asn-398 carries N-linked (GlcNAc...) asparagine; by host glycosylation. A helical transmembrane segment spans residues 436-456 (IHSVLSLFLLALFLLFLAPCL). Residue Cys-455 is the site of S-palmitoyl cysteine; by host attachment. At 457-515 (IKCLTSRLLKLLRQAPHFPEISLAPKPDSDYQALLPSAPEIYSHLSPTKPDYINLRPCP) the chain is on the cytoplasmic side.

The mature envelope protein (Env) consists of a trimer of SU-TM heterodimers attached by a labile interchain disulfide bond. Specific enzymatic cleavages in vivo yield mature proteins. Envelope glycoproteins are synthesized as an inactive precursor that is N-glycosylated and processed likely by host cell furin or by a furin-like protease in the Golgi to yield the mature SU and TM proteins. The cleavage site between SU and TM requires the minimal sequence [KR]-X-[KR]-R. In terms of processing, the CXXC motif is highly conserved across a broad range of retroviral envelope proteins. It is thought to participate in the formation of a labile disulfide bond possibly with the CX6CC motif present in the transmembrane protein. Isomerization of the intersubunit disulfide bond to an SU intrachain disulfide bond is thought to occur upon receptor recognition in order to allow membrane fusion. Post-translationally, the transmembrane protein is palmitoylated.

The protein localises to the virion membrane. Its subcellular location is the host cell membrane. Its function is as follows. The surface protein (SU) attaches the virus to the host cell by binding to its receptor. This interaction triggers the refolding of the transmembrane protein (TM) and is thought to activate its fusogenic potential by unmasking its fusion peptide. Fusion occurs at the host cell plasma membrane. The transmembrane protein (TM) acts as a class I viral fusion protein. Under the current model, the protein has at least 3 conformational states: pre-fusion native state, pre-hairpin intermediate state, and post-fusion hairpin state. During viral and target cell membrane fusion, the coiled coil regions (heptad repeats) assume a trimer-of-hairpins structure, positioning the fusion peptide in close proximity to the C-terminal region of the ectodomain. The formation of this structure appears to drive apposition and subsequent fusion of viral and target cell membranes. Membranes fusion leads to delivery of the nucleocapsid into the cytoplasm. The protein is Envelope glycoprotein (env) of Bovine leukemia virus (isolate Belgium LB285) (BLV).